Consider the following 325-residue polypeptide: Ribosomal RNA small subunit methyltransferase H (325 aa).

Residues Gly-45–His-47, Asp-65, Tyr-92, Asp-113, and Gln-120 contribute to the S-adenosyl-L-methionine site.

It belongs to the methyltransferase superfamily. RsmH family.

It is found in the cytoplasm. The enzyme catalyses cytidine(1402) in 16S rRNA + S-adenosyl-L-methionine = N(4)-methylcytidine(1402) in 16S rRNA + S-adenosyl-L-homocysteine + H(+). Functionally, specifically methylates the N4 position of cytidine in position 1402 (C1402) of 16S rRNA. The chain is Ribosomal RNA small subunit methyltransferase H from Oleidesulfovibrio alaskensis (strain ATCC BAA-1058 / DSM 17464 / G20) (Desulfovibrio alaskensis).